A 93-amino-acid polypeptide reads, in one-letter code: Cytochrome c (93 aa).

Residues 1-13 show a composition bias toward low complexity; it reads AALPPGDAAAAQG. Positions 1-21 are disordered; that stretch reads AALPPGDAAAAQGGSNGVGPN. Heme c is bound at residue Met70.

This sequence belongs to the cytochrome c family. In terms of processing, binds 1 heme c group covalently per subunit.

It localises to the mitochondrion intermembrane space. Functionally, electron carrier protein. The oxidized form of the cytochrome c heme group can accept an electron from the heme group of the cytochrome c1 subunit of cytochrome reductase. Cytochrome c then transfers this electron to the cytochrome oxidase complex, the final protein carrier in the mitochondrial electron-transport chain. In Trypanosoma brucei brucei, this protein is Cytochrome c.